The following is a 61-amino-acid chain: Large ribosomal subunit protein uL30 (61 aa).

The protein belongs to the universal ribosomal protein uL30 family. Part of the 50S ribosomal subunit.

The sequence is that of Large ribosomal subunit protein uL30 from Chlorobaculum parvum (strain DSM 263 / NCIMB 8327) (Chlorobium vibrioforme subsp. thiosulfatophilum).